We begin with the raw amino-acid sequence, 164 residues long: R-phycoerythrin alpha chain (164 aa).

(2R,3E)-phycoerythrobilin-binding residues include C82 and C139.

This sequence belongs to the phycobiliprotein family. In terms of assembly, heterodimer of an alpha and a beta chain. In terms of processing, contains two covalently linked bilin chromophores.

It localises to the plastid. The protein localises to the chloroplast thylakoid membrane. Its function is as follows. Light-harvesting photosynthetic bile pigment-protein from the phycobiliprotein complex. The chain is R-phycoerythrin alpha chain (cpeA) from Porphyra purpurea (Red seaweed).